The sequence spans 430 residues: Aspartate aminotransferase, mitochondrial (430 aa).

The N-terminal 29 residues, 1–29 (MALLHSGRFLSGVAAAFHPGLAAAASARA), are a transit peptide targeting the mitochondrion. Residue Thr-48 is modified to Phosphothreonine. Lys-59 is modified (N6-acetyllysine). Gly-65 lines the substrate pocket. Lys-73 carries the N6-acetyllysine; alternate modification. Lys-73 is modified (N6-succinyllysine; alternate). Position 82 is an N6-acetyllysine (Lys-82). Position 90 is an N6-acetyllysine; alternate (Lys-90). The residue at position 90 (Lys-90) is an N6-succinyllysine; alternate. The residue at position 96 (Tyr-96) is a 3'-nitrotyrosine; alternate. Tyr-96 is subject to Phosphotyrosine; alternate. Lys-107 and Lys-122 each carry N6-acetyllysine; alternate. N6-succinyllysine; alternate occurs at positions 107 and 122. At Ser-143 the chain carries Phosphoserine. Lys-159 is subject to N6-acetyllysine; alternate. Lys-159 is subject to N6-succinyllysine; alternate. Position 162 (Trp-162) interacts with substrate. Lys-185 carries the post-translational modification N6-acetyllysine; alternate. N6-succinyllysine; alternate is present on Lys-185. Residue Asn-215 participates in substrate binding. Position 227 is an N6-succinyllysine (Lys-227). Lys-234 bears the N6-acetyllysine mark. An N6-acetyllysine; alternate mark is found at Lys-279 and Lys-296. Lys-279 is subject to N6-(pyridoxal phosphate)lysine; alternate. At Lys-296 the chain carries N6-succinyllysine; alternate. Lys-302 is modified (N6-acetyllysine). An N6-acetyllysine; alternate modification is found at Lys-309. An N6-succinyllysine; alternate modification is found at Lys-309. Arg-313 bears the Asymmetric dimethylarginine mark. An N6-acetyllysine; alternate modification is found at Lys-338. Lys-338 carries the post-translational modification N6-succinyllysine; alternate. At Lys-345 the chain carries N6-acetyllysine. Lys-363 is modified (N6-acetyllysine; alternate). The residue at position 363 (Lys-363) is an N6-succinyllysine; alternate. Residues Lys-364 and Lys-387 each carry the N6-acetyllysine modification. Residues Lys-396 and Lys-404 each carry the N6-acetyllysine; alternate modification. N6-succinyllysine; alternate occurs at positions 396 and 404. Arg-407 is a binding site for substrate.

The protein belongs to the class-I pyridoxal-phosphate-dependent aminotransferase family. Homodimer. Requires pyridoxal 5'-phosphate as cofactor.

Its subcellular location is the mitochondrion matrix. It is found in the cell membrane. It catalyses the reaction L-aspartate + 2-oxoglutarate = oxaloacetate + L-glutamate. The catalysed reaction is L-kynurenine + 2-oxoglutarate = 4-(2-aminophenyl)-2,4-dioxobutanoate + L-glutamate. Its function is as follows. Catalyzes the irreversible transamination of the L-tryptophan metabolite L-kynurenine to form kynurenic acid (KA). As a member of the malate-aspartate shuttle, it has a key role in the intracellular NAD(H) redox balance. Is important for metabolite exchange between mitochondria and cytosol, and for amino acid metabolism. Facilitates cellular uptake of long-chain free fatty acids. The polypeptide is Aspartate aminotransferase, mitochondrial (GOT2) (Bos taurus (Bovine)).